The following is a 23-amino-acid chain: Potassium channel toxin kappa-KTx 1.2 (23 aa).

Disulfide bonds link C4–C22 and C8–C18. Cysteine amide is present on C22.

Belongs to the short scorpion toxin superfamily. Potassium channel inhibitor kappa-KTx family. Kappa-KTx 1 subfamily. Post-translationally, the two disulfide isomers globular (C1-C3, C2-C4) and beads (C1-C2, C3-C4) do not show activity on Kv10.1/KCNH1/EAG1. In terms of tissue distribution, expressed by the venom gland.

The protein resides in the secreted. Its function is as follows. Shows weak blocking activity on voltage-gated potassium channels Kv10.1/KCNH1/EAG1 (IC(50)=26 uM), Kv1.2/KCNA2 (Kd=150 uM), Kv1.3/KCNA3 (Kd=40 uM), Kv1.6/KCNA3 (16.6% inhibition at 40 uM toxin). The block is dose-dependent, voltage-independent, and reversible. Also shows a weak inhibitory activity on the plant pathogen F.culmorum growth (IC(50)=18.8-37.7 uM). The chain is Potassium channel toxin kappa-KTx 1.2 from Chersonesometrus fulvipes (Indian black scorpion).